Here is a 3093-residue protein sequence, read N- to C-terminus: Intermembrane lipid transfer protein VPS13A (3093 aa).

A Chorein N-terminal domain is found at F3–K116. The stretch at L373–E406 is one TPR 1 repeat. S839 carries the post-translational modification Phosphoserine. An FFAT motif is present at residues E842–C848. The residue at position 1416 (S1416) is a Phosphoserine. The 246-residue stretch at V2209–G2454 folds into the SHR-BD domain. One copy of the TPR 2 repeat lies at I2860 to F2898. The required for lipid droplet localization stretch occupies residues P2953 to A3027.

This sequence belongs to the VPS13 family. Interacts (via FFAT motif) with VAPA and VAPB. Interacts with RAB7A. Interacts with XK.

Its subcellular location is the mitochondrion outer membrane. The protein resides in the endoplasmic reticulum membrane. It is found in the endosome membrane. The protein localises to the lysosome membrane. It localises to the lipid droplet. Its subcellular location is the golgi apparatus. The protein resides in the cytoplasmic vesicle. It is found in the secretory vesicle. The protein localises to the neuronal dense core vesicle. Mediates the transfer of lipids between membranes at organelle contact sites. Required for the formation or stabilization of ER-mitochondria contact sites which enable transfer of lipids between the ER and mitochondria. Negatively regulates lipid droplet size and motility. Required for efficient lysosomal protein degradation. This Macaca fascicularis (Crab-eating macaque) protein is Intermembrane lipid transfer protein VPS13A (VPS13A).